The primary structure comprises 93 residues: Small ribosomal subunit protein uS19c (93 aa).

The protein belongs to the universal ribosomal protein uS19 family.

It is found in the plastid. The protein localises to the chloroplast. Its function is as follows. Protein S19 forms a complex with S13 that binds strongly to the 16S ribosomal RNA. The sequence is that of Small ribosomal subunit protein uS19c from Stigeoclonium helveticum (Green alga).